The primary structure comprises 597 residues: Elongation factor 4 (597 aa).

The tr-type G domain maps to 2–184 (DHIRNFSIIA…ALIAKVPPPK (183 aa)). GTP-binding positions include 14–19 (DHGKST) and 131–134 (NKID).

The protein belongs to the TRAFAC class translation factor GTPase superfamily. Classic translation factor GTPase family. LepA subfamily.

The protein localises to the cell inner membrane. The catalysed reaction is GTP + H2O = GDP + phosphate + H(+). Functionally, required for accurate and efficient protein synthesis under certain stress conditions. May act as a fidelity factor of the translation reaction, by catalyzing a one-codon backward translocation of tRNAs on improperly translocated ribosomes. Back-translocation proceeds from a post-translocation (POST) complex to a pre-translocation (PRE) complex, thus giving elongation factor G a second chance to translocate the tRNAs correctly. Binds to ribosomes in a GTP-dependent manner. The polypeptide is Elongation factor 4 (Cupriavidus taiwanensis (strain DSM 17343 / BCRC 17206 / CCUG 44338 / CIP 107171 / LMG 19424 / R1) (Ralstonia taiwanensis (strain LMG 19424))).